The sequence spans 63 residues: Gallinacin-4 (63 aa).

The N-terminal stretch at 1-19 is a signal peptide; sequence MKILCFFIVLLFVAVHGAV. Residues 20 to 25 constitute a propeptide that is removed on maturation; that stretch reads GFSRSP. Intrachain disulfides connect Cys-31/Cys-59, Cys-38/Cys-53, and Cys-43/Cys-60.

Belongs to the beta-defensin family. In terms of tissue distribution, strong expression in the bone marrow and testis. Widely expressed. Weak expression in the ovarian stroma, but not expressed in the ovarian follicles.

It is found in the secreted. Its subcellular location is the cytoplasmic granule. Functionally, has bactericidal activity. Potent activity against S.typhimurium and S.entiriditis. This is Gallinacin-4 (GAL4) from Gallus gallus (Chicken).